We begin with the raw amino-acid sequence, 311 residues long: Aspartate carbamoyltransferase catalytic subunit (311 aa).

The carbamoyl phosphate site is built by Arg55 and Thr56. L-aspartate is bound at residue Lys85. The carbamoyl phosphate site is built by Arg106, His135, and Gln138. L-aspartate-binding residues include Arg168 and Arg230. Residues Leu268 and Pro269 each coordinate carbamoyl phosphate.

This sequence belongs to the aspartate/ornithine carbamoyltransferase superfamily. ATCase family. Heterododecamer (2C3:3R2) of six catalytic PyrB chains organized as two trimers (C3), and six regulatory PyrI chains organized as three dimers (R2).

The enzyme catalyses carbamoyl phosphate + L-aspartate = N-carbamoyl-L-aspartate + phosphate + H(+). Its pathway is pyrimidine metabolism; UMP biosynthesis via de novo pathway; (S)-dihydroorotate from bicarbonate: step 2/3. Its function is as follows. Catalyzes the condensation of carbamoyl phosphate and aspartate to form carbamoyl aspartate and inorganic phosphate, the committed step in the de novo pyrimidine nucleotide biosynthesis pathway. This is Aspartate carbamoyltransferase catalytic subunit from Buchnera aphidicola subsp. Schizaphis graminum (strain Sg).